Reading from the N-terminus, the 390-residue chain is Probable tRNA pseudouridine synthase D (390 aa).

The active-site Nucleophile is Asp-93. One can recognise a TRUD domain in the interval 166-353 (YVLNYYGIQR…YGTRRKMITP (188 aa)).

This sequence belongs to the pseudouridine synthase TruD family.

The catalysed reaction is uridine(13) in tRNA = pseudouridine(13) in tRNA. Could be responsible for synthesis of pseudouridine from uracil-13 in transfer RNAs. This chain is Probable tRNA pseudouridine synthase D, found in Methanococcus maripaludis (strain C5 / ATCC BAA-1333).